Here is a 115-residue protein sequence, read N- to C-terminus: Large ribosomal subunit protein uL18 (115 aa).

The protein belongs to the universal ribosomal protein uL18 family. As to quaternary structure, part of the 50S ribosomal subunit; part of the 5S rRNA/L5/L18/L25 subcomplex. Contacts the 5S and 23S rRNAs.

Functionally, this is one of the proteins that bind and probably mediate the attachment of the 5S RNA into the large ribosomal subunit, where it forms part of the central protuberance. This chain is Large ribosomal subunit protein uL18, found in Vesicomyosocius okutanii subsp. Calyptogena okutanii (strain HA).